Here is a 754-residue protein sequence, read N- to C-terminus: Peptidyl-prolyl cis-trans isomerase G (754 aa).

The PPIase cyclophilin-type domain occupies 11-176; the sequence is FFDIAINNQP…AEVRILSCGE (166 aa). Basic residues predominate over residues 182–193; the sequence is KVKKEEKKRHKS. The tract at residues 182 to 754 is disordered; sequence KVKKEEKKRH…SPGTDEDKSG (573 aa). Residues 194–216 show a composition bias toward low complexity; it reads SSSSSSSSSDSDSSSDSQSSSDS. A compositionally biased stretch (basic residues) spans 228–253; it reads KKRKKKHRKNSRKHKKEKKKRKKSKK. Phosphoserine occurs at positions 254, 256, 257, 259, and 290. A compositionally biased stretch (basic and acidic residues) spans 292 to 310; that stretch reads PKADEKERKNREREREREC. Phosphoserine is present on serine 315. Positions 329–347 are enriched in basic residues; that stretch reads SGRKIKGRGPRRYRTPSRS. Basic and acidic residues-rich tracts occupy residues 348–368 and 379–449; these read RSRD…EMQR and RWIK…DKYK. Position 356 is a phosphoserine (serine 356). Residue threonine 358 is modified to Phosphothreonine. Serine 386 carries the post-translational modification Phosphoserine. A Glycyl lysine isopeptide (Lys-Gly) (interchain with G-Cter in SUMO2) cross-link involves residue lysine 392. Residues serine 397, serine 413, and serine 415 each carry the phosphoserine modification. Residues 450–462 show a composition bias toward basic residues; sequence NKVKKRAKSKSRS. Basic and acidic residues-rich tracts occupy residues 463 to 553 and 578 to 599; these read KSKE…DITK and RTHD…QEYR. Basic residues predominate over residues 616–627; the sequence is SRSKDRRRRRRD. Positions 628 to 686 are enriched in basic and acidic residues; sequence SRSSEREESQSRNKDKYRNQESKSSHRKENSESEKRMYSKSRDHNSSNNSREKKADRDQ. Residues serine 687 and serine 690 each carry the phosphoserine modification. Positions 687-698 are enriched in polar residues; sequence SPFSKIKQSSQD. Lysine 693 is covalently cross-linked (Glycyl lysine isopeptide (Lys-Gly) (interchain with G-Cter in SUMO2)). A phosphoserine mark is found at serine 696, serine 744, and serine 745. The segment covering 707–754 has biased composition (basic and acidic residues); that stretch reads KNKEDEKIRSSVEKENQKSKGQENDHVHEKNKKFDHESSPGTDEDKSG. Phosphothreonine is present on threonine 748. Position 753 is a phosphoserine (serine 753).

Interacts with CLK1, PNN and with the phosphorylated C-terminal domain of RNA polymerase II. Ubiquitous.

The protein localises to the nucleus matrix. It is found in the nucleus speckle. The enzyme catalyses [protein]-peptidylproline (omega=180) = [protein]-peptidylproline (omega=0). Inhibited by cyclosporin A (CsA). Its function is as follows. PPIase that catalyzes the cis-trans isomerization of proline imidic peptide bonds in oligopeptides and may therefore assist protein folding. May be implicated in the folding, transport, and assembly of proteins. May play an important role in the regulation of pre-mRNA splicing. The polypeptide is Peptidyl-prolyl cis-trans isomerase G (PPIG) (Homo sapiens (Human)).